Reading from the N-terminus, the 329-residue chain is Apolipoprotein E (329 aa).

The signal sequence occupies residues 1 to 18 (MKVLWAALVVALLAGCWA). 8 consecutive repeat copies span residues 92-113 (TLME…EQLG), 114-135 (PMAS…ARLR), 136-157 (SDME…AMLG), 158-179 (QSTE…KRVL), 180-201 (RDAE…EGAE), 202-223 (RSVS…TRHA), 224-245 (KVDA…QQLR), and 246-267 (GRLE…EQME). The tract at residues 92-267 (TLMEETMKEI…HLDEVREQME (176 aa)) is 8 X 22 AA approximate tandem repeats. Methionine 155 bears the Methionine sulfoxide mark. Position 159 is a phosphoserine (serine 159). Residues 170–180 (HMRKLRKRVLR) form an LDL and other lipoprotein receptors binding region. A heparin-binding site is contributed by 174-177 (LRKR). The segment at 222–302 (HAKVDALATQ…GWFEPLVEDM (81 aa)) is lipid-binding and lipoprotein association. 241–248 (GQQLRGRL) contacts heparin. The interval 278–329 (NQMRQQAEAFQARLKGWFEPLVEDMQRQWAVLVEKVQAAVGTSPTTPPVETK) is homooligomerization. Residues 290–302 (RLKGWFEPLVEDM) are specificity for association with VLDL.

Belongs to the apolipoprotein A1/A4/E family. In terms of assembly, homotetramer. May interact with ABCA1; functionally associated with ABCA1 in the biogenesis of HDLs. May interact with APP/A4 amyloid-beta peptide; the interaction is extremely stable in vitro but its physiological significance is unclear. May interact with MAPT. May interact with MAP2. In the cerebrospinal fluid, interacts with secreted SORL1. Interacts with PMEL; this allows the loading of PMEL luminal fragment on ILVs to induce fibril nucleation. Post-translationally, APOE exists as multiple glycosylated and sialylated glycoforms within cells and in plasma. The extent of glycosylation and sialylation are tissue and context specific. Glycated in plasma VLDL. In terms of processing, phosphorylated by FAM20C in the extracellular medium.

It is found in the secreted. Its subcellular location is the extracellular space. The protein localises to the extracellular matrix. The protein resides in the extracellular vesicle. It localises to the endosome. It is found in the multivesicular body. APOE is an apolipoprotein, a protein associating with lipid particles, that mainly functions in lipoprotein-mediated lipid transport between organs via the plasma and interstitial fluids. APOE is a core component of plasma lipoproteins and is involved in their production, conversion and clearance. Apolipoproteins are amphipathic molecules that interact both with lipids of the lipoprotein particle core and the aqueous environment of the plasma. As such, APOE associates with chylomicrons, chylomicron remnants, very low density lipoproteins (VLDL) and intermediate density lipoproteins (IDL) but shows a preferential binding to high-density lipoproteins (HDL). It also binds a wide range of cellular receptors including the LDL receptor/LDLR, the LDL receptor-related proteins LRP1, LRP2 and LRP8 and the very low-density lipoprotein receptor/VLDLR that mediate the cellular uptake of the APOE-containing lipoprotein particles. Finally, APOE also has a heparin-binding activity and binds heparan-sulfate proteoglycans on the surface of cells, a property that supports the capture and the receptor-mediated uptake of APOE-containing lipoproteins by cells. A main function of APOE is to mediate lipoprotein clearance through the uptake of chylomicrons, VLDLs, and HDLs by hepatocytes. APOE is also involved in the biosynthesis by the liver of VLDLs as well as their uptake by peripheral tissues ensuring the delivery of triglycerides and energy storage in muscle, heart and adipose tissues. By participating in the lipoprotein-mediated distribution of lipids among tissues, APOE plays a critical role in plasma and tissues lipid homeostasis. APOE is also involved in two steps of reverse cholesterol transport, the HDLs-mediated transport of cholesterol from peripheral tissues to the liver, and thereby plays an important role in cholesterol homeostasis. First, it is functionally associated with ABCA1 in the biogenesis of HDLs in tissues. Second, it is enriched in circulating HDLs and mediates their uptake by hepatocytes. APOE also plays an important role in lipid transport in the central nervous system, regulating neuron survival and sprouting. The polypeptide is Apolipoprotein E (APOE) (Eumetopias jubatus (Steller sea lion)).